Consider the following 126-residue polypeptide: Aspartate 1-decarboxylase (126 aa).

The active-site Schiff-base intermediate with substrate; via pyruvic acid is the S25. The residue at position 25 (S25) is a Pyruvic acid (Ser). T57 is a substrate binding site. The active-site Proton donor is Y58. Position 73-75 (73-75 (GAA)) interacts with substrate.

It belongs to the PanD family. As to quaternary structure, heterooctamer of four alpha and four beta subunits. Pyruvate serves as cofactor. Is synthesized initially as an inactive proenzyme, which is activated by self-cleavage at a specific serine bond to produce a beta-subunit with a hydroxyl group at its C-terminus and an alpha-subunit with a pyruvoyl group at its N-terminus.

The protein localises to the cytoplasm. The catalysed reaction is L-aspartate + H(+) = beta-alanine + CO2. The protein operates within cofactor biosynthesis; (R)-pantothenate biosynthesis; beta-alanine from L-aspartate: step 1/1. Functionally, catalyzes the pyruvoyl-dependent decarboxylation of aspartate to produce beta-alanine. The polypeptide is Aspartate 1-decarboxylase (Citrobacter koseri (strain ATCC BAA-895 / CDC 4225-83 / SGSC4696)).